A 228-amino-acid chain; its full sequence is C-type lectin domain-containing protein 88 (228 aa).

The first 18 residues, 1–18, serve as a signal peptide directing secretion; that stretch reads MQFIFFGTLFSGLLLVCA. The O-linked (Xyl...) (chondroitin sulfate) serine glycan is linked to Ser-27. One can recognise a C-type lectin domain in the interval 88–218; that stretch reads YSDSCYWVET…CTYLFYSICE (131 aa). Cystine bridges form between Cys-109–Cys-217 and Cys-188–Cys-209. Asn-220 carries N-linked (GlcNAc...) asparagine glycosylation.

This Caenorhabditis elegans protein is C-type lectin domain-containing protein 88.